The sequence spans 112 residues: Ribonuclease P protein component (112 aa).

It belongs to the RnpA family. Consists of a catalytic RNA component (M1 or rnpB) and a protein subunit.

The enzyme catalyses Endonucleolytic cleavage of RNA, removing 5'-extranucleotides from tRNA precursor.. RNaseP catalyzes the removal of the 5'-leader sequence from pre-tRNA to produce the mature 5'-terminus. It can also cleave other RNA substrates such as 4.5S RNA. The protein component plays an auxiliary but essential role in vivo by binding to the 5'-leader sequence and broadening the substrate specificity of the ribozyme. This Mycoplasmopsis synoviae (strain 53) (Mycoplasma synoviae) protein is Ribonuclease P protein component.